The following is a 301-amino-acid chain: Acetylglutamate kinase (301 aa).

Substrate-binding positions include 68–69, Arg-90, and Asn-195; that span reads GG.

This sequence belongs to the acetylglutamate kinase family. ArgB subfamily.

The protein localises to the cytoplasm. The catalysed reaction is N-acetyl-L-glutamate + ATP = N-acetyl-L-glutamyl 5-phosphate + ADP. It functions in the pathway amino-acid biosynthesis; L-arginine biosynthesis; N(2)-acetyl-L-ornithine from L-glutamate: step 2/4. Its function is as follows. Catalyzes the ATP-dependent phosphorylation of N-acetyl-L-glutamate. The chain is Acetylglutamate kinase from Pseudomonas entomophila (strain L48).